A 296-amino-acid chain; its full sequence is 4-hydroxybenzoate octaprenyltransferase (296 aa).

The next 8 membrane-spanning stretches (helical) occupy residues 23 to 43 (IGIL…SPGW), 46 to 66 (GLVL…GCVM), 99 to 119 (LALA…PLVV), 141 to 161 (IPQA…FAAI), 163 to 183 (GQLP…AIAY), 211 to 231 (DVFA…WVGV), 237 to 257 (WPYF…YALI), and 265 to 285 (CFKA…GVLA).

This sequence belongs to the UbiA prenyltransferase family. Requires Mg(2+) as cofactor.

It localises to the cell inner membrane. It catalyses the reaction all-trans-octaprenyl diphosphate + 4-hydroxybenzoate = 4-hydroxy-3-(all-trans-octaprenyl)benzoate + diphosphate. It functions in the pathway cofactor biosynthesis; ubiquinone biosynthesis. Its function is as follows. Catalyzes the prenylation of para-hydroxybenzoate (PHB) with an all-trans polyprenyl group. Mediates the second step in the final reaction sequence of ubiquinone-8 (UQ-8) biosynthesis, which is the condensation of the polyisoprenoid side chain with PHB, generating the first membrane-bound Q intermediate 3-octaprenyl-4-hydroxybenzoate. The protein is 4-hydroxybenzoate octaprenyltransferase of Methylobacillus flagellatus (strain ATCC 51484 / DSM 6875 / VKM B-1610 / KT).